We begin with the raw amino-acid sequence, 369 residues long: MTTAVPRLIEQFEHGLDAPICLTWELTYACNLACVHCLSSSGKRDPGELSTRQCQDIIDELERMQVFYVNIGGGEPTVRPDFWELVDYATAHHVGVKFSTNGVRINPEVAARLAASDCVDVQISLDGATAEVNDAVRGAGSFAMAVRALENLAAAGFADAKISVVVTRHNVGQLDDFAALADRYGATLRITRLRPSGRGADVWEELHPTAAQQVALYDWLVAKGERVLTGDSFFHLAPLGSSGALAGLNMCGAGRVVCLIDPVGDVYACPFAIHDRFLAGNVLTDGGFDQVWKNAPLFRQLREPQSAGACGSCGHYDSCRGGCMAAKFFTGLPLDGPDPECVQGYGAPALAQERHAPRPRVDHSRGSRE.

Positions 16–232 (LDAPICLTWE…KGERVLTGDS (217 aa)) constitute a Radical SAM core domain. Residues C30, C34, C37, C251, C258, C269, C310, C313, C319, C323, and C341 each contribute to the [4Fe-4S] cluster site. Residues 347–369 (APALAQERHAPRPRVDHSRGSRE) are disordered. Basic and acidic residues predominate over residues 352-369 (QERHAPRPRVDHSRGSRE).

The protein belongs to the radical SAM superfamily. MftC family. Interacts with MftB. Requires [4Fe-4S] cluster as cofactor.

It catalyses the reaction [mycofactocin precursor peptide]-C-terminal glycyl-L-valyl-L-tyrosine + S-adenosyl-L-methionine = [mycofactocin precursor peptide]-C-terminal glycyl-N-{[2-(4-hydroxyphenyl)ethenyl]-3-methylbutanamide} + 5'-deoxyadenosine + L-methionine + CO2. The enzyme catalyses [mycofactocin precursor peptide]-C-terminal glycyl-N-{[2-(4-hydroxyphenyl)ethenyl]-3-methylbutanamide} + AH2 + S-adenosyl-L-methionine = [mycofactocin precursor peptide]-C-terminal glycyl-N-{5-[(4-hydroxyphenyl)methyl]-4,4-dimethyl-2-oxopyrrolidin-3-yl}acetamide + 5'-deoxyadenosine + L-methionine + A + H(+). Radical S-adenosylmethionine (SAM) enzyme responsible for the first step of the biosynthesis of the enzyme cofactor mycofactocin (MFT). Catalyzes two reactions at the C-terminus of the mycofactocin precursor (the MftA peptide). The first one is the oxidative decarboxylation of the C-terminal L-tyrosine of MftA, forming an unsaturated tyramine moiety. The second reaction is the cross-linking of the tyramine with the penultimate L-valine residue, forming a five-membered lactam ring. Its activity requires the presence of the MftB chaperone. The sequence is that of Mycofactocin maturase MftC from Mycobacterium ulcerans (strain Agy99).